The sequence spans 448 residues: Bifunctional protein GlmU (448 aa).

A pyrophosphorylase region spans residues 1 to 232 (MTARSSLTIV…EDEVRGINTK (232 aa)). UDP-N-acetyl-alpha-D-glucosamine is bound by residues 11-14 (LAAG), K25, Q78, and 83-84 (GT). D108 contributes to the Mg(2+) binding site. Residues G144, E158, N173, and N230 each contribute to the UDP-N-acetyl-alpha-D-glucosamine site. N230 provides a ligand contact to Mg(2+). Positions 233–253 (AQLAQAEAAMQARLRQAAMDA) are linker. The interval 254–448 (GVTLIAPETV…FRNAKLRQTK (195 aa)) is N-acetyltransferase. UDP-N-acetyl-alpha-D-glucosamine-binding residues include R319 and K337. H349 acts as the Proton acceptor in catalysis. Positions 352 and 363 each coordinate UDP-N-acetyl-alpha-D-glucosamine. Residues A366, 372 to 373 (NY), S409, and R426 contribute to the acetyl-CoA site. The interval 427–448 (SPQTTKEGAAARFRNAKLRQTK) is disordered.

In the N-terminal section; belongs to the N-acetylglucosamine-1-phosphate uridyltransferase family. It in the C-terminal section; belongs to the transferase hexapeptide repeat family. In terms of assembly, homotrimer. Requires Mg(2+) as cofactor.

Its subcellular location is the cytoplasm. It catalyses the reaction alpha-D-glucosamine 1-phosphate + acetyl-CoA = N-acetyl-alpha-D-glucosamine 1-phosphate + CoA + H(+). It carries out the reaction N-acetyl-alpha-D-glucosamine 1-phosphate + UTP + H(+) = UDP-N-acetyl-alpha-D-glucosamine + diphosphate. Its pathway is nucleotide-sugar biosynthesis; UDP-N-acetyl-alpha-D-glucosamine biosynthesis; N-acetyl-alpha-D-glucosamine 1-phosphate from alpha-D-glucosamine 6-phosphate (route II): step 2/2. The protein operates within nucleotide-sugar biosynthesis; UDP-N-acetyl-alpha-D-glucosamine biosynthesis; UDP-N-acetyl-alpha-D-glucosamine from N-acetyl-alpha-D-glucosamine 1-phosphate: step 1/1. It participates in bacterial outer membrane biogenesis; LPS lipid A biosynthesis. Its function is as follows. Catalyzes the last two sequential reactions in the de novo biosynthetic pathway for UDP-N-acetylglucosamine (UDP-GlcNAc). The C-terminal domain catalyzes the transfer of acetyl group from acetyl coenzyme A to glucosamine-1-phosphate (GlcN-1-P) to produce N-acetylglucosamine-1-phosphate (GlcNAc-1-P), which is converted into UDP-GlcNAc by the transfer of uridine 5-monophosphate (from uridine 5-triphosphate), a reaction catalyzed by the N-terminal domain. This Bradyrhizobium sp. (strain ORS 278) protein is Bifunctional protein GlmU.